Reading from the N-terminus, the 64-residue chain is Neuropeptide-like 4 (64 aa).

The signal sequence occupies residues 1-18 (MFKLLVVVFAALFAAALA). 2 consecutive propeptides follow at residues 19-40 (VPAP…EPAP) and 63-64 (YG).

It localises to the secreted. The protein is Neuropeptide-like 4 (Nplp4) of Drosophila melanogaster (Fruit fly).